Consider the following 429-residue polypeptide: Large ribosomal subunit protein mL37 (429 aa).

A mitochondrion-targeting transit peptide spans 1–29 (MALRPVVLRRAPAHSRGILTRPGPPRPRG). The interval 12–45 (PAHSRGILTRPGPPRPRGPLPRTPWTTRGPPPDQ) is disordered. A compositionally biased stretch (pro residues) spans 22 to 33 (PGPPRPRGPLPR).

It belongs to the mitochondrion-specific ribosomal protein mL37 family. In terms of assembly, component of the mitochondrial ribosome large subunit (39S) which comprises a 16S rRNA and about 50 distinct proteins.

Its subcellular location is the mitochondrion. This chain is Large ribosomal subunit protein mL37 (MRPL37), found in Gallus gallus (Chicken).